Consider the following 319-residue polypeptide: ATP-dependent 6-phosphofructokinase (319 aa).

Gly-11 contributes to the ATP binding site. 21 to 25 (RAVVR) is a binding site for ADP. ATP-binding positions include 72–73 (RC) and 102–105 (GDGS). A Mg(2+)-binding site is contributed by Asp-103. Position 125–127 (125–127 (TID)) interacts with substrate. The Proton acceptor role is filled by Asp-127. Arg-154 serves as a coordination point for ADP. Substrate-binding positions include Arg-162 and 169-171 (MGR). ADP-binding positions include 185-187 (GAE), Arg-211, and 213-215 (KRH). Residues Glu-222, Arg-243, and 249 to 252 (HVQR) each bind substrate.

It belongs to the phosphofructokinase type A (PFKA) family. ATP-dependent PFK group I subfamily. Prokaryotic clade 'B1' sub-subfamily. Homotetramer. It depends on Mg(2+) as a cofactor.

It is found in the cytoplasm. It carries out the reaction beta-D-fructose 6-phosphate + ATP = beta-D-fructose 1,6-bisphosphate + ADP + H(+). It participates in carbohydrate degradation; glycolysis; D-glyceraldehyde 3-phosphate and glycerone phosphate from D-glucose: step 3/4. Its activity is regulated as follows. Allosterically activated by ADP and other diphosphonucleosides, and allosterically inhibited by phosphoenolpyruvate. In terms of biological role, catalyzes the phosphorylation of D-fructose 6-phosphate to fructose 1,6-bisphosphate by ATP, the first committing step of glycolysis. The polypeptide is ATP-dependent 6-phosphofructokinase (Clostridioides difficile (strain 630) (Peptoclostridium difficile)).